We begin with the raw amino-acid sequence, 318 residues long: Methionyl-tRNA formyltransferase (318 aa).

110 to 113 (SLLP) is a binding site for (6S)-5,6,7,8-tetrahydrofolate.

This sequence belongs to the Fmt family.

It catalyses the reaction L-methionyl-tRNA(fMet) + (6R)-10-formyltetrahydrofolate = N-formyl-L-methionyl-tRNA(fMet) + (6S)-5,6,7,8-tetrahydrofolate + H(+). Functionally, attaches a formyl group to the free amino group of methionyl-tRNA(fMet). The formyl group appears to play a dual role in the initiator identity of N-formylmethionyl-tRNA by promoting its recognition by IF2 and preventing the misappropriation of this tRNA by the elongation apparatus. The sequence is that of Methionyl-tRNA formyltransferase from Latilactobacillus sakei subsp. sakei (strain 23K) (Lactobacillus sakei subsp. sakei).